We begin with the raw amino-acid sequence, 149 residues long: Ribonuclease H (149 aa).

Residues 5-146 (QRPHVVIFTD…ADELAREGLA (142 aa)) enclose the RNase H type-1 domain. Positions 14, 52, 74, and 138 each coordinate Mg(2+).

The protein belongs to the RNase H family. Monomer. It depends on Mg(2+) as a cofactor.

It is found in the cytoplasm. It catalyses the reaction Endonucleolytic cleavage to 5'-phosphomonoester.. Its function is as follows. Endonuclease that specifically degrades the RNA of RNA-DNA hybrids. The polypeptide is Ribonuclease H (Afipia carboxidovorans (strain ATCC 49405 / DSM 1227 / KCTC 32145 / OM5) (Oligotropha carboxidovorans)).